Here is a 763-residue protein sequence, read N- to C-terminus: Nibrin (763 aa).

In terms of domain architecture, FHA spans 22–81 (YVVGRKNCAILIPEDQSISRCHATLSVSHPSANLGQTNAASVLSIKDSSKYGTTVNGDKM). BRCT domains are found at residues 102 to 179 (SKYR…CELL) and 215 to 324 (KRKS…NPRR). Disordered regions lie at residues 389–496 (VKET…SSQT), 535–593 (SKAA…SEIE), and 738–763 (QTQQVREESLAEDLFRYNPKPSKRRR). A compositionally biased stretch (basic and acidic residues) spans 423 to 433 (LFREDETDTRK). Positions 434 to 443 (NTPSLLPTKS) are enriched in polar residues. Residues 469-474 (AKKRDR) carry the Nuclear localization signal motif. Residues 473–482 (DRAEDEKEAS) show a composition bias toward basic and acidic residues. Positions 742 to 752 (VREESLAEDLF) are enriched in basic and acidic residues. Positions 748-757 (AEDLFRYNPK) match the FxF/Y motif motif.

It belongs to the Nibrin family. Component of the MRN complex composed of two heterodimers rad50 and mre11 associated with a single nbn.

The protein resides in the nucleus. The protein localises to the chromosome. It is found in the PML body. Its subcellular location is the telomere. Functionally, component of the MRN complex, which plays a central role in double-strand break (DSB) repair, DNA recombination, maintenance of telomere integrity and meiosis. The MRN complex is involved in the repair of DNA double-strand breaks (DSBs) via homologous recombination (HR), an error-free mechanism which primarily occurs during S and G2 phases. The complex (1) mediates the end resection of damaged DNA, which generates proper single-stranded DNA, a key initial steps in HR, and is (2) required for the recruitment of other repair factors and efficient activation of ATM and ATR upon DNA damage. The MRN complex possesses single-strand endonuclease activity and double-strand-specific 3'-5' exonuclease activity, which are provided by MRE11, to initiate end resection, which is required for single-strand invasion and recombination. Within the MRN complex, nbn acts as a protein-protein adapter, which specifically recognizes and binds phosphorylated proteins, promoting their recruitment to DNA damage sites. Recruits mre11 and rad50 components of the MRN complex to DSBs in response to DNA damage. Promotes the recruitment of PI3/PI4-kinase family members atm, atr, and probably DNA-PKcs to the DNA damage sites, activating their functions. Mediates the recruitment of phosphorylated rbbp8/CtIP to DSBs, leading to cooperation between the MRN complex and rbbp8/CtIP to initiate end resection. The MRN complex promotes recruitment of topbp1 to DNA damage sites. The MRN complex and rbbp8/CtIP are also required for chromosome alignment during metaphase. The protein is Nibrin of Xenopus laevis (African clawed frog).